We begin with the raw amino-acid sequence, 93 residues long: Large ribosomal subunit protein bL27 (93 aa).

A propeptide spanning residues 1–9 (MLQLNLQFF) is cleaved from the precursor. Residues 14-33 (GVGSTKNGRDSISKRLGAKR) form a disordered region.

Belongs to the bacterial ribosomal protein bL27 family. Post-translationally, the N-terminus is cleaved by ribosomal processing cysteine protease Prp.

The chain is Large ribosomal subunit protein bL27 from Exiguobacterium sp. (strain ATCC BAA-1283 / AT1b).